The following is a 357-amino-acid chain: UDP-N-acetylglucosamine--N-acetylmuramyl-(pentapeptide) pyrophosphoryl-undecaprenol N-acetylglucosamine transferase (357 aa).

Residues 15–17 (TGG), asparagine 124, arginine 165, serine 194, and glutamine 288 each bind UDP-N-acetyl-alpha-D-glucosamine.

The protein belongs to the glycosyltransferase 28 family. MurG subfamily.

The protein resides in the cell inner membrane. It catalyses the reaction di-trans,octa-cis-undecaprenyl diphospho-N-acetyl-alpha-D-muramoyl-L-alanyl-D-glutamyl-meso-2,6-diaminopimeloyl-D-alanyl-D-alanine + UDP-N-acetyl-alpha-D-glucosamine = di-trans,octa-cis-undecaprenyl diphospho-[N-acetyl-alpha-D-glucosaminyl-(1-&gt;4)]-N-acetyl-alpha-D-muramoyl-L-alanyl-D-glutamyl-meso-2,6-diaminopimeloyl-D-alanyl-D-alanine + UDP + H(+). It functions in the pathway cell wall biogenesis; peptidoglycan biosynthesis. In terms of biological role, cell wall formation. Catalyzes the transfer of a GlcNAc subunit on undecaprenyl-pyrophosphoryl-MurNAc-pentapeptide (lipid intermediate I) to form undecaprenyl-pyrophosphoryl-MurNAc-(pentapeptide)GlcNAc (lipid intermediate II). The protein is UDP-N-acetylglucosamine--N-acetylmuramyl-(pentapeptide) pyrophosphoryl-undecaprenol N-acetylglucosamine transferase of Nostoc sp. (strain PCC 7120 / SAG 25.82 / UTEX 2576).